Consider the following 382-residue polypeptide: Chaperone protein DnaJ (382 aa).

The 66-residue stretch at 5 to 70 folds into the J domain; that stretch reads DYYELLGVQK…EKRAAYDRYG (66 aa). The CR-type zinc-finger motif lies at 146 to 224; sequence GAEKEISFRK…CHGEGRVRRT (79 aa). Zn(2+) contacts are provided by Cys159, Cys162, Cys176, Cys179, Cys198, Cys201, Cys212, and Cys215. 4 CXXCXGXG motif repeats span residues 159 to 166, 176 to 183, 198 to 205, and 212 to 219; these read CERCDGSG, CPTCRGAG, CPTCGGMG, and CTVCHGEG. The segment at 230–250 is disordered; that stretch reads RIPPGVDNGSRLRSSGNGEAG.

This sequence belongs to the DnaJ family. Homodimer. Zn(2+) is required as a cofactor.

The protein localises to the cytoplasm. In terms of biological role, participates actively in the response to hyperosmotic and heat shock by preventing the aggregation of stress-denatured proteins and by disaggregating proteins, also in an autonomous, DnaK-independent fashion. Unfolded proteins bind initially to DnaJ; upon interaction with the DnaJ-bound protein, DnaK hydrolyzes its bound ATP, resulting in the formation of a stable complex. GrpE releases ADP from DnaK; ATP binding to DnaK triggers the release of the substrate protein, thus completing the reaction cycle. Several rounds of ATP-dependent interactions between DnaJ, DnaK and GrpE are required for fully efficient folding. Also involved, together with DnaK and GrpE, in the DNA replication of plasmids through activation of initiation proteins. In Opitutus terrae (strain DSM 11246 / JCM 15787 / PB90-1), this protein is Chaperone protein DnaJ.